Consider the following 357-residue polypeptide: Probable cinnamyl alcohol dehydrogenase (357 aa).

Zn(2+) is bound at residue cysteine 47. Serine 49 is an NADP(+) binding site. Residues histidine 69, glutamate 70, cysteine 100, cysteine 103, cysteine 106, cysteine 114, and cysteine 163 each contribute to the Zn(2+) site. NADP(+) contacts are provided by residues threonine 167, 188–193 (GLGGVG), 211–216 (SSSDKK), threonine 251, glycine 275, and 298–300 (SFI).

Belongs to the zinc-containing alcohol dehydrogenase family. In terms of assembly, homodimer. It depends on Zn(2+) as a cofactor.

It catalyses the reaction (E)-cinnamyl alcohol + NADP(+) = (E)-cinnamaldehyde + NADPH + H(+). It carries out the reaction (E)-coniferol + NADP(+) = (E)-coniferaldehyde + NADPH + H(+). The enzyme catalyses (E)-sinapyl alcohol + NADP(+) = (E)-sinapaldehyde + NADPH + H(+). The catalysed reaction is (E)-4-coumaroyl alcohol + NADP(+) = (E)-4-coumaraldehyde + NADPH + H(+). It catalyses the reaction (E)-caffeyl alcohol + NADP(+) = (E)-caffeyl aldehyde + NADPH + H(+). Its pathway is aromatic compound metabolism; phenylpropanoid biosynthesis. Functionally, involved in lignin biosynthesis. Catalyzes the final step specific for the production of lignin monomers. Catalyzes the NADPH-dependent reduction of coniferaldehyde, 5-hydroxyconiferaldehyde, sinapaldehyde, 4-coumaraldehyde and caffeyl aldehyde to their respective alcohols. In Pinus taeda (Loblolly pine), this protein is Probable cinnamyl alcohol dehydrogenase.